The following is a 249-amino-acid chain: UPF0246 protein EUBREC_1226 (249 aa).

It belongs to the UPF0246 family.

This Agathobacter rectalis (strain ATCC 33656 / DSM 3377 / JCM 17463 / KCTC 5835 / VPI 0990) (Eubacterium rectale) protein is UPF0246 protein EUBREC_1226.